The primary structure comprises 494 residues: Aspartyl/glutamyl-tRNA(Asn/Gln) amidotransferase subunit B (494 aa).

This sequence belongs to the GatB/GatE family. GatB subfamily. As to quaternary structure, heterotrimer of A, B and C subunits.

It catalyses the reaction L-glutamyl-tRNA(Gln) + L-glutamine + ATP + H2O = L-glutaminyl-tRNA(Gln) + L-glutamate + ADP + phosphate + H(+). The enzyme catalyses L-aspartyl-tRNA(Asn) + L-glutamine + ATP + H2O = L-asparaginyl-tRNA(Asn) + L-glutamate + ADP + phosphate + 2 H(+). Functionally, allows the formation of correctly charged Asn-tRNA(Asn) or Gln-tRNA(Gln) through the transamidation of misacylated Asp-tRNA(Asn) or Glu-tRNA(Gln) in organisms which lack either or both of asparaginyl-tRNA or glutaminyl-tRNA synthetases. The reaction takes place in the presence of glutamine and ATP through an activated phospho-Asp-tRNA(Asn) or phospho-Glu-tRNA(Gln). This Rhodopseudomonas palustris (strain BisA53) protein is Aspartyl/glutamyl-tRNA(Asn/Gln) amidotransferase subunit B.